The following is a 425-amino-acid chain: C2H2 type master regulator of conidiophore development brlA (425 aa).

Disordered stretches follow at residues 28–72, 232–257, and 281–301; these read MASS…RHTG, KTHS…PMSR, and VQRQ…SLSL. Residues 30–44 show a composition bias toward low complexity; sequence SSFSPMESPTPTPTS. The segment covering 232-256 has biased composition (polar residues); the sequence is KTHSPTTPVRSCSLGTTSGTDTPMS. A compositionally biased stretch (basic residues) spans 285–294; sequence PSRKVARKQS. 2 C2H2-type zinc fingers span residues 321–345 and 351–376; these read KGRF…PHVC and ERAF…GRNR. Residues 365-374 show a composition bias toward basic residues; the sequence is TKTHSKRGGR. Residues 365–425 are disordered; it reads TKTHSKRGGR…RETSEEAWLE (61 aa).

It localises to the nucleus. In terms of biological role, brlA, abaA and wetA are pivotal regulators of conidiophore development and conidium maturation. They act individually and together to regulate their own expression and that of numerous other sporulation-specific genes. Binds promoters of target genes at brlA response elements (BREs) containing the conserved sequence 5'-(C/A)(A/G)AGGG(G/A)-3'. Also coordinates the expression of carbohydrate-active enzymes and of the key effectors of cell wall remodeling during autolysis. The chain is C2H2 type master regulator of conidiophore development brlA from Aspergillus niger (strain ATCC MYA-4892 / CBS 513.88 / FGSC A1513).